Reading from the N-terminus, the 315-residue chain is Ribosomal RNA small subunit methyltransferase H (315 aa).

S-adenosyl-L-methionine contacts are provided by residues 35 to 37 (GGH), aspartate 55, phenylalanine 80, aspartate 102, and glutamine 109.

This sequence belongs to the methyltransferase superfamily. RsmH family.

The protein resides in the cytoplasm. The catalysed reaction is cytidine(1402) in 16S rRNA + S-adenosyl-L-methionine = N(4)-methylcytidine(1402) in 16S rRNA + S-adenosyl-L-homocysteine + H(+). Specifically methylates the N4 position of cytidine in position 1402 (C1402) of 16S rRNA. In Shewanella halifaxensis (strain HAW-EB4), this protein is Ribosomal RNA small subunit methyltransferase H.